We begin with the raw amino-acid sequence, 115 residues long: Large ribosomal subunit protein bL19 (115 aa).

Belongs to the bacterial ribosomal protein bL19 family.

Its function is as follows. This protein is located at the 30S-50S ribosomal subunit interface and may play a role in the structure and function of the aminoacyl-tRNA binding site. The chain is Large ribosomal subunit protein bL19 from Desulforapulum autotrophicum (strain ATCC 43914 / DSM 3382 / VKM B-1955 / HRM2) (Desulfobacterium autotrophicum).